A 118-amino-acid polypeptide reads, in one-letter code: Myotrophin (118 aa).

3 ANK repeats span residues 1–30 (MSDKEFMWALKNGDLDEVKDYVAKGEDVNR), 34–65 (GGRKPLHYAADCGQLEILEFLLLKGADINAPD), and 67–98 (HNITPLLSAVYEGHVSCVKLLLSKGADKTVKG).

It belongs to the myotrophin family.

The protein resides in the cytoplasm. The protein localises to the nucleus. Its subcellular location is the perinuclear region. Functionally, regulates NF-kappa-B transcription factor activity. Promotes growth of cardiomyocytes, but not cardiomyocyte proliferation. Promotes cardiac muscle hypertrophy. Plays a role in the regulation of the growth of actin filaments. Inhibits the activity of the F-actin-capping protein complex. The polypeptide is Myotrophin (MTPN) (Gallus gallus (Chicken)).